Here is a 153-residue protein sequence, read N- to C-terminus: Ribonuclease HI (153 aa).

An RNase H type-1 domain is found at 1 to 141 (MKSVNIFTDG…CDELAKLGAN (141 aa)). 4 residues coordinate Mg(2+): D9, E47, D69, and D133.

The protein belongs to the RNase H family. In terms of assembly, monomer. Mg(2+) is required as a cofactor.

It localises to the cytoplasm. The enzyme catalyses Endonucleolytic cleavage to 5'-phosphomonoester.. Its function is as follows. Endonuclease that specifically degrades the RNA of RNA-DNA hybrids. The sequence is that of Ribonuclease HI from Haemophilus ducreyi (strain 35000HP / ATCC 700724).